Here is a 399-residue protein sequence, read N- to C-terminus: Probable aspartate/prephenate aminotransferase (399 aa).

Residues glycine 39, tryptophan 125, and asparagine 175 each coordinate L-aspartate. Lysine 239 carries the N6-(pyridoxal phosphate)lysine modification. Arginine 375 provides a ligand contact to L-aspartate.

Belongs to the class-I pyridoxal-phosphate-dependent aminotransferase family. Homodimer. Requires pyridoxal 5'-phosphate as cofactor.

It is found in the cytoplasm. It carries out the reaction L-aspartate + 2-oxoglutarate = oxaloacetate + L-glutamate. The enzyme catalyses L-arogenate + 2-oxoglutarate = prephenate + L-glutamate. Catalyzes the reversible conversion of aspartate and 2-oxoglutarate to glutamate and oxaloacetate. Can also transaminate prephenate in the presence of glutamate. The chain is Probable aspartate/prephenate aminotransferase (aatA) from Rickettsia bellii (strain RML369-C).